The primary structure comprises 530 residues: Inactive ubiquitin carboxyl-terminal hydrolase 17-like protein 7 (530 aa).

The USP domain maps to 80-375; it reads AGLQKIGNTF…QAYVLFYIQK (296 aa). Residues 382–392 show a composition bias toward basic and acidic residues; it reads SESVSRGREPR. Disordered regions lie at residues 382-412, 431-454, and 490-530; these read SESV…KRDH, ESTL…NVRK, and SSTK…LVCQ. Over residues 490–512 the composition is skewed to polar residues; sequence SSTKPTDQESMNTGTLASLQGST. Residues 513–524 are compositionally biased toward basic residues; sequence RRSKGNNKHSKR.

This sequence belongs to the peptidase C19 family. USP17 subfamily.

It is found in the nucleus. It localises to the endoplasmic reticulum. The chain is Inactive ubiquitin carboxyl-terminal hydrolase 17-like protein 7 (USP17L7) from Homo sapiens (Human).